The chain runs to 537 residues: CTP synthase (537 aa).

The segment at 1-269 (MNQTKYIFVT…DVVALKKLDL (269 aa)) is amidoligase domain. Ser15 is a binding site for CTP. Ser15 contacts UTP. 16 to 21 (SLGKGI) contacts ATP. Residue Tyr56 participates in L-glutamine binding. Asp73 is a binding site for ATP. The Mg(2+) site is built by Asp73 and Glu143. CTP is bound by residues 150-152 (DIE), 190-195 (KTKPTQ), and Lys226. UTP is bound by residues 190–195 (KTKPTQ) and Lys226. The region spanning 295-537 (NIGLVGKYVE…VAAAVNAHKK (243 aa)) is the Glutamine amidotransferase type-1 domain. Gly357 is an L-glutamine binding site. The active-site Nucleophile; for glutamine hydrolysis is Cys384. Residues 385-388 (LGMQ), Glu408, and Arg465 contribute to the L-glutamine site. Catalysis depends on residues His510 and Glu512.

The protein belongs to the CTP synthase family. In terms of assembly, homotetramer.

It carries out the reaction UTP + L-glutamine + ATP + H2O = CTP + L-glutamate + ADP + phosphate + 2 H(+). It catalyses the reaction L-glutamine + H2O = L-glutamate + NH4(+). The enzyme catalyses UTP + NH4(+) + ATP = CTP + ADP + phosphate + 2 H(+). It participates in pyrimidine metabolism; CTP biosynthesis via de novo pathway; CTP from UDP: step 2/2. Its activity is regulated as follows. Allosterically activated by GTP, when glutamine is the substrate; GTP has no effect on the reaction when ammonia is the substrate. The allosteric effector GTP functions by stabilizing the protein conformation that binds the tetrahedral intermediate(s) formed during glutamine hydrolysis. Inhibited by the product CTP, via allosteric rather than competitive inhibition. Catalyzes the ATP-dependent amination of UTP to CTP with either L-glutamine or ammonia as the source of nitrogen. Regulates intracellular CTP levels through interactions with the four ribonucleotide triphosphates. The sequence is that of CTP synthase from Flavobacterium johnsoniae (strain ATCC 17061 / DSM 2064 / JCM 8514 / BCRC 14874 / CCUG 350202 / NBRC 14942 / NCIMB 11054 / UW101) (Cytophaga johnsonae).